A 431-amino-acid polypeptide reads, in one-letter code: Tol-Pal system protein TolB (431 aa).

A signal peptide spans 1–26 (MSLMTKLGFRALVASCLITAGSAANA). A disordered region spans residues 406–431 (DGSAPPQILSVQGGSVREPSWGPFMQ).

It belongs to the TolB family. The Tol-Pal system is composed of five core proteins: the inner membrane proteins TolA, TolQ and TolR, the periplasmic protein TolB and the outer membrane protein Pal. They form a network linking the inner and outer membranes and the peptidoglycan layer.

It localises to the periplasm. Its function is as follows. Part of the Tol-Pal system, which plays a role in outer membrane invagination during cell division and is important for maintaining outer membrane integrity. This is Tol-Pal system protein TolB from Burkholderia orbicola (strain AU 1054).